A 327-amino-acid chain; its full sequence is tRNA uridine(34) hydroxylase (327 aa).

One can recognise a Rhodanese domain in the interval Q122 to W218. Catalysis depends on C178, which acts as the Cysteine persulfide intermediate.

This sequence belongs to the TrhO family.

It carries out the reaction uridine(34) in tRNA + AH2 + O2 = 5-hydroxyuridine(34) in tRNA + A + H2O. In terms of biological role, catalyzes oxygen-dependent 5-hydroxyuridine (ho5U) modification at position 34 in tRNAs. This is tRNA uridine(34) hydroxylase from Chlamydia trachomatis serovar A (strain ATCC VR-571B / DSM 19440 / HAR-13).